Here is a 118-residue protein sequence, read N- to C-terminus: Vesicle-associated membrane protein 1 (118 aa).

The segment at 1–36 is disordered; the sequence is MSAPAQPPAEGTEGTAPGGGPPGPPPNMTSNRRLQQ. The Cytoplasmic segment spans residues 1-96; it reads MSAPAQPPAE…KRKYWWKNCK (96 aa). Positions 33–93 constitute a v-SNARE coiled-coil homology domain; it reads RLQQTQAQVE…AKLKRKYWWK (61 aa). A Phosphoserine modification is found at S63. A helical; Anchor for type IV membrane protein transmembrane segment spans residues 97–116; sequence MMIMLGAICAIIVVVIVIYF. The Vesicular segment spans residues 117 to 118; it reads FT.

Belongs to the synaptobrevin family. Interacts with VAPA and VAPB. In terms of processing, (Microbial infection) Targeted and hydrolyzed by C.botulinum neurotoxin type B (BoNT/B, botB) which probably hydrolyzes the 78-Gln-|-Phe-79 bond and inhibits neurotransmitter release. Post-translationally, (Microbial infection) Targeted and hydrolyzed by C.botulinum neurotoxin type D (BoNT/D, botD) which probably hydrolyzes the 61-Arg-|-Leu-62 bond and inhibits neurotransmitter release. BoNT/D has low catalytic activity on this protein due to its sequence. Note that humans are not known to be infected by C.botulinum type D. (Microbial infection) Targeted and hydrolyzed by C.botulinum neurotoxin type F (BoNT/F, botF) which probably hydrolyzes the 60-Gln-|-Lys-61 bond and inhibits neurotransmitter release. In terms of processing, (Microbial infection) Targeted and hydrolyzed by C.botulinum neurotoxin type X (BoNT/X) which probably hydrolyzes the 68-Arg-|-Ala-69 bond and inhibits neurotransmitter release. It remains unknown whether BoNT/X is ever produced, or what organisms it targets. Nervous system, skeletal muscle and adipose tissue.

Its subcellular location is the cytoplasmic vesicle. It is found in the secretory vesicle. The protein localises to the synaptic vesicle membrane. The protein resides in the synapse. It localises to the synaptosome. Its subcellular location is the cytoplasmic vesicle membrane. It is found in the mitochondrion outer membrane. Involved in the targeting and/or fusion of transport vesicles to their target membrane. The sequence is that of Vesicle-associated membrane protein 1 (VAMP1) from Homo sapiens (Human).